Consider the following 327-residue polypeptide: Porphobilinogen deaminase (327 aa).

Cys-251 carries the post-translational modification S-(dipyrrolylmethanemethyl)cysteine.

It belongs to the HMBS family. Dipyrromethane serves as cofactor.

It catalyses the reaction 4 porphobilinogen + H2O = hydroxymethylbilane + 4 NH4(+). It functions in the pathway porphyrin-containing compound metabolism; protoporphyrin-IX biosynthesis; coproporphyrinogen-III from 5-aminolevulinate: step 2/4. Functionally, tetrapolymerization of the monopyrrole PBG into the hydroxymethylbilane pre-uroporphyrinogen in several discrete steps. The chain is Porphobilinogen deaminase (HEM3) from Kluyveromyces lactis (strain ATCC 8585 / CBS 2359 / DSM 70799 / NBRC 1267 / NRRL Y-1140 / WM37) (Yeast).